The sequence spans 112 residues: Ribosomal processing cysteine protease Prp (112 aa).

His22 acts as the Proton donor in catalysis. Catalysis depends on Cys34, which acts as the Nucleophile.

The protein belongs to the Prp family. Homodimer.

An essential cysteine protease that cleaves the N-terminus from ribosomal protein bL27. The chain is Ribosomal processing cysteine protease Prp from Bacillus subtilis (strain 168).